A 351-amino-acid chain; its full sequence is Tropomodulin-2 (351 aa).

S25 is modified (phosphoserine).

It belongs to the tropomodulin family. In terms of assembly, binds to the N-terminus of tropomyosin and to actin. As to expression, neuronal-tissue specific.

It is found in the cytoplasm. The protein localises to the cytoskeleton. Blocks the elongation and depolymerization of the actin filaments at the pointed end. The Tmod/TM complex contributes to the formation of the short actin protofilament, which in turn defines the geometry of the membrane skeleton. The polypeptide is Tropomodulin-2 (TMOD2) (Homo sapiens (Human)).